Consider the following 139-residue polypeptide: Translation initiation factor 2 subunit beta (139 aa).

Belongs to the eIF-2-beta/eIF-5 family. In terms of assembly, heterotrimer composed of an alpha, a beta and a gamma chain.

EIF-2 functions in the early steps of protein synthesis by forming a ternary complex with GTP and initiator tRNA. The sequence is that of Translation initiation factor 2 subunit beta from Saccharolobus islandicus (strain Y.N.15.51 / Yellowstone #2) (Sulfolobus islandicus).